A 152-amino-acid chain; its full sequence is Large ribosomal subunit protein uL15 (152 aa).

The segment at 1 to 57 (MTSTLNTLKSNSGSRKKKLRKGRGIAAGQGASCGFGMRGQKSRSGRPTRPGFEGGQM) is disordered. A compositionally biased stretch (basic residues) spans 14-23 (SRKKKLRKGR). A compositionally biased stretch (gly residues) spans 25 to 37 (IAAGQGASCGFGM).

Belongs to the universal ribosomal protein uL15 family. Part of the 50S ribosomal subunit.

Functionally, binds to the 23S rRNA. The polypeptide is Large ribosomal subunit protein uL15 (Prochlorococcus marinus (strain MIT 9312)).